The primary structure comprises 250 residues: tRNA (guanine-N(1)-)-methyltransferase (250 aa).

S-adenosyl-L-methionine contacts are provided by residues Gly-108 and 127–132; that span reads LGDFVL.

Belongs to the RNA methyltransferase TrmD family. As to quaternary structure, homodimer.

Its subcellular location is the cytoplasm. It carries out the reaction guanosine(37) in tRNA + S-adenosyl-L-methionine = N(1)-methylguanosine(37) in tRNA + S-adenosyl-L-homocysteine + H(+). Its function is as follows. Specifically methylates guanosine-37 in various tRNAs. This is tRNA (guanine-N(1)-)-methyltransferase from Streptococcus agalactiae serotype Ia (strain ATCC 27591 / A909 / CDC SS700).